An 89-amino-acid chain; its full sequence is Acylphosphatase (89 aa).

The Acylphosphatase-like domain maps to 3–89 (QKHLQVFGTV…SEDFSDFKSI (87 aa)). Catalysis depends on residues Arg18 and Asn36.

The protein belongs to the acylphosphatase family.

It catalyses the reaction an acyl phosphate + H2O = a carboxylate + phosphate + H(+). This chain is Acylphosphatase (acyP), found in Staphylococcus haemolyticus (strain JCSC1435).